The primary structure comprises 64 residues: MPKMKTKSGAAKRFLKTATGFKHKHAFKSHILTKMSTKRKRQLRGSSLLHPSDVAKVARMLRVR.

This sequence belongs to the bacterial ribosomal protein bL35 family.

This Pseudomonas putida (strain W619) protein is Large ribosomal subunit protein bL35.